Reading from the N-terminus, the 452-residue chain is Activating transcription factor 7-interacting protein 2 (452 aa).

Ser-184 bears the Phosphoserine mark. The interval 185–206 (RSKRISSVNHTPLNSSEKAGRK) is disordered. Residue Ser-257 is modified to Phosphoserine. The Fibronectin type-III domain occupies 346–450 (PPQKPELKVK…IKSIPRFSEN (105 aa)).

This sequence belongs to the MCAF family. In terms of assembly, interacts with MBD1, SETDB1 and SP1. Probably forms a complex with SETDB1 and MBD1. As to expression, expressed in testis.

The protein localises to the nucleus. Its function is as follows. Recruiter that couples transcriptional factors to general transcription apparatus and thereby modulates transcription regulation and chromatin formation. Can both act as an activator or a repressor depending on the context. Mediates MBD1-dependent transcriptional repression, probably by recruiting complexes containing SETDB1. The complex formed with MBD1 and SETDB1 represses transcription and probably couples DNA methylation and histone H3 'Lys-9' trimethylation (H3K9me3) activity. The protein is Activating transcription factor 7-interacting protein 2 (Atf7ip2) of Mus musculus (Mouse).